A 245-amino-acid chain; its full sequence is 5-oxoprolinase subunit A (245 aa).

The protein belongs to the LamB/PxpA family. Forms a complex composed of PxpA, PxpB and PxpC.

The catalysed reaction is 5-oxo-L-proline + ATP + 2 H2O = L-glutamate + ADP + phosphate + H(+). In terms of biological role, catalyzes the cleavage of 5-oxoproline to form L-glutamate coupled to the hydrolysis of ATP to ADP and inorganic phosphate. The chain is 5-oxoprolinase subunit A from Haemophilus influenzae (strain 86-028NP).